Consider the following 105-residue polypeptide: Small ribosomal subunit protein uS10 (105 aa).

The protein belongs to the universal ribosomal protein uS10 family. As to quaternary structure, part of the 30S ribosomal subunit.

In terms of biological role, involved in the binding of tRNA to the ribosomes. This chain is Small ribosomal subunit protein uS10, found in Lawsonia intracellularis (strain PHE/MN1-00).